The following is a 256-amino-acid chain: Homeobox protein Hox-D13a (256 aa).

The segment at residues Gly-191–Pro-250 is a DNA-binding region (homeobox).

It belongs to the Abd-B homeobox family.

It is found in the nucleus. Sequence-specific transcription factor which is part of a developmental regulatory system that provides cells with specific positional identities on the anterior-posterior axis. The protein is Homeobox protein Hox-D13a (hoxd13a) of Danio rerio (Zebrafish).